The following is a 551-amino-acid chain: Frizzled-2 (551 aa).

An N-terminal signal peptide occupies residues 1 to 26 (MQGVTRASILLIIYHLFTLSLGQLHG). The Extracellular segment spans residues 27 to 231 (EKGISVPEHG…FSQDEIRFAR (205 aa)). The region spanning 33–152 (PEHGFCQPIS…HGAEQICVGQ (120 aa)) is the FZ domain. 5 cysteine pairs are disulfide-bonded: Cys38–Cys99, Cys46–Cys92, Cys83–Cys120, Cys109–Cys149, and Cys113–Cys137. Residue Asn52 is glycosylated (N-linked (GlcNAc...) asparagine). Asn153 carries an N-linked (GlcNAc...) asparagine glycan. A helical membrane pass occupies residues 232–252 (IWILIWSVLCCASTFITVTTY). Topologically, residues 253-265 (LVDMQRFRYPERP) are cytoplasmic. A helical membrane pass occupies residues 266–286 (IIFLSGCYTMVSVAYIAGFVL). Residues 287–313 (GDKVVCNEGFSEDGYKTVVQGTKKEGC) are Extracellular-facing. A helical transmembrane segment spans residues 314-334 (TILFMMLYFFSMASSIWWVIL). Residues 335 to 356 (SLTWFLAAGMKWGHEAIEANSQ) lie on the Cytoplasmic side of the membrane. The helical transmembrane segment at 357–377 (YFHLAAWAVPAVKTITILAMG) threads the bilayer. Over 378 to 400 (QIDGDLLSGVCFVGLNNIDPLRG) the chain is Extracellular. Residues 401–421 (FVLAPLFVYLFIGTSFLLAGF) form a helical membrane-spanning segment. Over 422–447 (VSLFRIRTIMKHDGTKTEKLERLMVR) the chain is Cytoplasmic. Residues 448-468 (IGVFSVLYTVPATIVIACYFY) form a helical membrane-spanning segment. Topologically, residues 469 to 505 (EQAFREHWERSWVSQNCKSLAIPCPLQYTPRMTPDFT) are extracellular. A helical transmembrane segment spans residues 506–526 (VYMIKYLMTLIVGITSGFWIW). Residues 527-534 (SGKTLHSW) lie on the Cytoplasmic side of the membrane. Residues 529–534 (KTLHSW) carry the Lys-Thr-X-X-X-Trp motif, mediates interaction with the PDZ domain of Dvl family members motif. The PDZ-binding signature appears at 549–551 (TTV).

The protein belongs to the G-protein coupled receptor Fz/Smo family. As to expression, widely expressed, especially in the eye anlage, otic vesicle and developing somites.

The protein resides in the membrane. Its subcellular location is the cell membrane. Receptor for Wnt proteins. Most of frizzled receptors are coupled to the beta-catenin canonical signaling pathway, which leads to the activation of disheveled proteins, inhibition of GSK-3 kinase, nuclear accumulation of beta-catenin and activation of Wnt target genes. A second signaling pathway involving PKC and calcium fluxes has been seen for some family members, but it is not yet clear if it represents a distinct pathway or if it can be integrated in the canonical pathway, as PKC seems to be required for Wnt-mediated inactivation of GSK-3 kinase. Both pathways seem to involve interactions with G-proteins. May be involved in transduction and intercellular transmission of polarity information during tissue morphogenesis and/or in differentiated tissues. The protein is Frizzled-2 (fzd2) of Xenopus laevis (African clawed frog).